A 212-amino-acid chain; its full sequence is Neuroendocrine protein 7B2 (212 aa).

Residues 1-26 (MVSRMVSTMLSGLLFWLASGWTPAFA) form the signal peptide. Cys120 and Cys130 form a disulfide bridge. Residues Ser141 and Ser205 each carry the phosphoserine modification. A disordered region spans residues 174-212 (GGERRKRRSVNPYLQGQRLDNVVAKKSVPHFSDEDKDPE).

Belongs to the 7B2 family. In terms of assembly, interacts with PCSK2/PC2 early in the secretory pathway. Dissociation occurs at later stages. Post-translationally, proteolytically cleaved in the Golgi by a furin-like convertase to generate bioactive peptides. Sulfated on tyrosine residues.

It localises to the secreted. Its function is as follows. Acts as a molecular chaperone for PCSK2/PC2, preventing its premature activation in the regulated secretory pathway. Binds to inactive PCSK2 in the endoplasmic reticulum and facilitates its transport from there to later compartments of the secretory pathway where it is proteolytically matured and activated. Also required for cleavage of PCSK2 but does not appear to be involved in its folding. Plays a role in regulating pituitary hormone secretion. The C-terminal peptide inhibits PCSK2 in vitro. The chain is Neuroendocrine protein 7B2 (SCG5) from Homo sapiens (Human).